An 81-amino-acid chain; its full sequence is MRKLALVPIQFYRYAISPLMANHCRFFPSCSCYAYEAIENHGIWRGGWLAVRRLGRCHPWNDGGFDPVPPAPSSRTSSIAE.

A disordered region spans residues 61 to 81; sequence NDGGFDPVPPAPSSRTSSIAE.

This sequence belongs to the UPF0161 family.

It is found in the cell inner membrane. Functionally, could be involved in insertion of integral membrane proteins into the membrane. This is Putative membrane protein insertion efficiency factor from Pseudomonas putida (strain ATCC 700007 / DSM 6899 / JCM 31910 / BCRC 17059 / LMG 24140 / F1).